A 291-amino-acid chain; its full sequence is MAVTLSLLLGGRVCAAVTRCGFATRGVAGPGPIGREPDPDSDWEPEERELQEVESTLKRQKQAIRFQKIRRQMEAPGAPPRTLTWEAMEQIRYLHEEFPESWSVPRLAEGFDVSTDVIRRVLKSKFLPTLEQKLKQDQKVLKKAGLAHSLQHLRGSGNTSKLLPAGHSVSGSLLMPGHEASSKDPNHSTALKVIESDTHRTNTPRRRKGRNKEIQDLEESFVPVAAPLGHPRELQKYSSDSESPRGTGSGALPSGQKLEELKAEEPDNFSSKVVQRGREFFDSNGNFLYRI.

The N-terminal stretch at 1 to 15 is a signal peptide; that stretch reads MAVTLSLLLGGRVCA. Disordered regions lie at residues 26–48 and 155–270; these read GVAGPGPIGREPDPDSDWEPEER and GSGN…DNFS. Phosphoserine is present on serine 41. N-linked (GlcNAc...) asparagine glycosylation is found at asparagine 158 and asparagine 186. The segment covering 236 to 246 has biased composition (polar residues); that stretch reads KYSSDSESPRG. A glycan (N-linked (GlcNAc...) asparagine) is linked at asparagine 268.

Belongs to the neugrin family. As to quaternary structure, forms a regulatory protein-RNA complex, consisting of RCC1L, NGRN, RPUSD3, RPUSD4, TRUB2, FASTKD2 and 16S mt-rRNA. Interacts with 16S mt-rRNA; this interaction is direct. In terms of tissue distribution, expressed at high levels in heart, brain and skeletal muscle. In brain, mainly expressed in neurons rather than glial cells.

The protein localises to the nucleus. It localises to the secreted. The protein resides in the mitochondrion membrane. In terms of biological role, plays an essential role in mitochondrial ribosome biogenesis. As a component of a functional protein-RNA module, consisting of RCC1L, NGRN, RPUSD3, RPUSD4, TRUB2, FASTKD2 and 16S mitochondrial ribosomal RNA (16S mt-rRNA), controls 16S mt-rRNA abundance and is required for intra-mitochondrial translation of core subunits of the oxidative phosphorylation system. The sequence is that of Neugrin from Homo sapiens (Human).